The sequence spans 1729 residues: Cullin-7 (1729 aa).

A disordered region spans residues 350–388 (DRPRSSARSPGSIFQPQLADVSPGLPATQAQPSFRRSRH). Ser371 is subject to Phosphoserine. The 74-residue stretch at 392–465 (RSEFASGNTY…HWHMLEILGF (74 aa)) folds into the CPH domain. Over residues 632–642 (SEDAAKVEAKE) the composition is skewed to basic and acidic residues. The segment at 632–654 (SEDAAKVEAKEPPSQSPNTPLQR) is disordered. Positions 845-1024 (PINIPFFDVF…HTRLFYMVRA (180 aa)) constitute a DOC domain. The disordered stretch occupies residues 1373-1405 (VGHGASGKEHKSEKEEEAGAAAAVDVAEGEEEE). Residue Lys1607 forms a Glycyl lysine isopeptide (Lys-Gly) (interchain with G-Cter in NEDD8) linkage.

This sequence belongs to the cullin family. As to quaternary structure, component of the 3M complex, composed of core components CUL7, CCDC8 and OBSL1. Component of the Cul7-RING(FBXW8) complex consisting of CUL7, RBX1, SKP1 and FBXW8. Within the Cul7-RING(FBXW8) complex interacts with FBXW8 and RBX1, but not with SKP1. Interacts with CUL1 (via the C-terminal domain); the interaction seems to be mediated by FBXW8; it is likely specific to FBXW8, but not other F-box proteins. Interacts (via the CPH domain) with p53/TP53; the interaction preferentially involves tetrameric and dimeric p53/TP53; this interaction recruits p53/TP53 for ubiquitination by neddylated CUL1-RBX1. The CUL7-CUL9 heterodimer seems to interact specifically with p53/TP53. Interacts with FBXW8; interaction is mutually exclusive of binding to CUL9 or p53/TP53. Interacts with CUL9; leading to inhibited CUL9 activity. Interacts with OBSL1. Interacts (as part of the 3M complex) with HDAC4 and HDAC5; it is negatively regulated by ANKRA2.

It is found in the cytoplasm. Its subcellular location is the cytoskeleton. It localises to the microtubule organizing center. The protein localises to the centrosome. The protein resides in the perinuclear region. It is found in the golgi apparatus. The protein operates within protein modification; protein ubiquitination. In terms of biological role, core component of the 3M and Cul7-RING(FBXW8) complexes, which mediate the ubiquitination and subsequent proteasomal degradation of target proteins. Core component of the 3M complex, a complex required to regulate microtubule dynamics and genome integrity. It is unclear how the 3M complex regulates microtubules, it could act by controlling the level of a microtubule stabilizer. The Cul7-RING(FBXW8) complex alone lacks ubiquitination activity and does not promote polyubiquitination and proteasomal degradation of p53/TP53. However it mediates recruitment of p53/TP53 for ubiquitination by neddylated CUL1-RBX1. Interaction with CUL9 is required to inhibit CUL9 activity and ubiquitination of BIRC5. The Cul7-RING(FBXW8) complex also mediates ubiquitination and consequent degradation of target proteins such as GORASP1, IRS1 and MAP4K1/HPK1. Ubiquitination of GORASP1 regulates Golgi morphogenesis and dendrite patterning in brain. Mediates ubiquitination and degradation of IRS1 in a mTOR-dependent manner: the Cul7-RING(FBXW8) complex recognizes and binds IRS1 previously phosphorylated by S6 kinase (RPS6KB1 or RPS6KB2). The Cul7-RING(FBXW8) complex also mediates ubiquitination of MAP4K1/HPK1: recognizes and binds autophosphorylated MAP4K1/HPK1, leading to its degradation, thereby affecting cell proliferation and differentiation. Acts as a regulator in trophoblast cell epithelial-mesenchymal transition and placental development. While the Cul7-RING(FBXW8) and the 3M complexes are associated and involved in common processes, CUL7 and the Cul7-RING(FBXW8) complex may have additional functions. Probably plays a role in the degradation of proteins involved in endothelial proliferation and/or differentiation. The polypeptide is Cullin-7 (CUL7) (Pongo abelii (Sumatran orangutan)).